A 381-amino-acid chain; its full sequence is Orotidine 5'-phosphate decarboxylase (381 aa).

Substrate contacts are provided by residues D42, 64 to 66, 99 to 108, Y333, and R352; these read KTH and DRKFGDIGHT. K101 acts as the Proton donor in catalysis. Residues 311–333 are disordered; the sequence is LPPEDEDQQTNGSVGGDGQGQQY.

It belongs to the OMP decarboxylase family.

It carries out the reaction orotidine 5'-phosphate + H(+) = UMP + CO2. It participates in pyrimidine metabolism; UMP biosynthesis via de novo pathway; UMP from orotate: step 2/2. The polypeptide is Orotidine 5'-phosphate decarboxylase (ura3) (Hypocrea jecorina (Trichoderma reesei)).